Reading from the N-terminus, the 321-residue chain is Cytochrome c biogenesis protein CcsA (321 aa).

Helical transmembrane passes span 9-29, 44-64, 68-88, 143-163, 226-246, 260-274, and 289-309; these read ILTHISFSTISIVITIHLITL, GMIATFFCITGFLVSRWASSG, LSNLYESLIFLSWALYILHMI, MLLSYATLLCGSLLSAALLMI, VISLGFTLLTIGILCGAVWAN, TWAFITWTIFAIYLH, and VASIGFLIIWICYFGINLLGI.

It belongs to the CcmF/CycK/Ccl1/NrfE/CcsA family. As to quaternary structure, may interact with Ccs1.

The protein localises to the plastid. Its subcellular location is the chloroplast thylakoid membrane. In terms of biological role, required during biogenesis of c-type cytochromes (cytochrome c6 and cytochrome f) at the step of heme attachment. The chain is Cytochrome c biogenesis protein CcsA from Oryza sativa subsp. indica (Rice).